An 818-amino-acid chain; its full sequence is Nibrin (818 aa).

The 49-residue stretch at 22-70 (YVVGRKNCEILLTNDQSISRVHAVLTVTEQAVTLKDSSKYGTFVNGEKL) folds into the FHA domain. 2 BRCT domains span residues 91 to 168 (SKFS…SALS) and 211 to 301 (GKTF…LAAI). Disordered regions lie at residues 372–716 (AVGE…DLPR), 729–757 (NNSS…KKNV), and 793–818 (EEKL…AKKR). The segment covering 379-405 (KTNPTQKASTTNKPLSLGQEPSSTRIV) has biased composition (polar residues). The span at 409–419 (VMSSESFSVVE) shows a compositional bias: low complexity. The span at 444–469 (APSSGNTTLKHSPQKQTALTSFFQPS) shows a compositional bias: polar residues. The short motif at 470–475 (SKKRPR) is the Nuclear localization signal element. Residues 515 to 530 (EETSLGQACGTGQNSS) show a composition bias toward polar residues. Over residues 549–571 (TAADDLEMSLEELEFLMSDEMDE) the composition is skewed to acidic residues. The segment covering 586–602 (GLTSKINSEQLSNQQEV) has biased composition (polar residues). The segment covering 603 to 612 (TESKGRKGEK) has biased composition (basic and acidic residues). The segment covering 613–625 (NQQSSSSNIQSMQ) has biased composition (low complexity). 2 stretches are compositionally biased toward polar residues: residues 633 to 644 (VTNQDTQTQSKR) and 653 to 662 (SSANKGPSKN). Positions 663-675 (KTPELEEVKKEEV) are enriched in basic and acidic residues. Composition is skewed to polar residues over residues 678-692 (VVNS…QTSE) and 699-708 (MQASTSNSGP). Positions 793–808 (EEKLNEREETLGDDLF) are enriched in basic and acidic residues. Residues 804 to 813 (GDDLFRYNPR) carry the FxF/Y motif motif.

This sequence belongs to the Nibrin family. Component of the MRN complex composed of two heterodimers rad50 and mre11 associated with a single nbn.

Its subcellular location is the nucleus. It is found in the chromosome. It localises to the PML body. The protein localises to the telomere. In terms of biological role, component of the MRN complex, which plays a central role in double-strand break (DSB) repair, DNA recombination, maintenance of telomere integrity and meiosis. The MRN complex is involved in the repair of DNA double-strand breaks (DSBs) via homologous recombination (HR), an error-free mechanism which primarily occurs during S and G2 phases. The complex (1) mediates the end resection of damaged DNA, which generates proper single-stranded DNA, a key initial steps in HR, and is (2) required for the recruitment of other repair factors and efficient activation of ATM and ATR upon DNA damage. The MRN complex possesses single-strand endonuclease activity and double-strand-specific 3'-5' exonuclease activity, which are provided by MRE11, to initiate end resection, which is required for single-strand invasion and recombination. Within the MRN complex, nbn acts as a protein-protein adapter, which specifically recognizes and binds phosphorylated proteins, promoting their recruitment to DNA damage sites. Recruits mre11 and rad50 components of the MRN complex to DSBs in response to DNA damage. Promotes the recruitment of PI3/PI4-kinase family members atm, atr, and probably DNA-PKcs to the DNA damage sites, activating their functions. Mediates the recruitment of phosphorylated rbbp8/CtIP to DSBs, leading to cooperation between the MRN complex and rbbp8/CtIP to initiate end resection. The MRN complex and rbbp8/CtIP are also required for chromosome alignment during metaphase. This is Nibrin (nbn) from Danio rerio (Zebrafish).